The primary structure comprises 341 residues: Cyclin-Y (341 aa).

Gly2 is lipidated: N-myristoyl glycine. A phosphoserine mark is found at Ser21 and Ser25. A Phosphothreonine modification is found at Thr30. Residue Ser33 is modified to Phosphoserine. Phosphothreonine is present on Thr37. Thr67 bears the Phosphothreonine; by CDK14 mark. Residues Ser71 and Ser73 each carry the phosphoserine; by CDK14 modification. Phosphothreonine is present on Thr75. The residue at position 83 (Ser83) is a Phosphoserine; by CDK14. Phosphoserine occurs at positions 99, 100, and 102. In terms of domain architecture, Cyclin N-terminal spans 143–265 (DIFDENLHPL…FLELLQFNIN (123 aa)). Residue Ser280 is modified to Phosphoserine. Residues Ser288 and Ser295 each carry the phosphoserine; by CDK14 modification. Residues Ser324 and Ser326 each carry the phosphoserine modification. Thr331 carries the phosphothreonine modification.

Belongs to the cyclin family. Cyclin Y subfamily. In terms of assembly, found in a complex with CAPRIN2, LRP6 and CDK14 during G2/M stage; CAPRIN2 functions as a scaffold for the complex by binding to CCNY via its N terminus and to CDK14 via its C terminus. Interacts with CDK14. Interacts with CDK16. Interacts with LRP6. In terms of processing, ubiquitinated; leading to its degradation. Heavily phosphorylated. Phosphorylation at Ser-71 and Ser-73 by CDK14 is enhanced during the G2 and M cell cycle phases, and creates a phosphodegron triggering SCF-dependent ubiquitination. Widely expressed.

The protein localises to the cell membrane. It is found in the nucleus. Its function is as follows. Positive regulatory subunit of the cyclin-dependent kinases CDK14/PFTK1 and CDK16. Acts as a cell-cycle regulator of Wnt signaling pathway during G2/M phase by recruiting CDK14/PFTK1 to the plasma membrane and promoting phosphorylation of LRP6, leading to the activation of the Wnt signaling pathway. Recruits CDK16 to the plasma membrane. Isoform 3 might play a role in the activation of MYC-mediated transcription. The polypeptide is Cyclin-Y (CCNY) (Homo sapiens (Human)).